The following is an 877-amino-acid chain: Alanine--tRNA ligase (877 aa).

Residues His-563, His-567, Cys-665, and His-669 each coordinate Zn(2+).

The protein belongs to the class-II aminoacyl-tRNA synthetase family. Zn(2+) serves as cofactor.

The protein resides in the cytoplasm. It carries out the reaction tRNA(Ala) + L-alanine + ATP = L-alanyl-tRNA(Ala) + AMP + diphosphate. Functionally, catalyzes the attachment of alanine to tRNA(Ala) in a two-step reaction: alanine is first activated by ATP to form Ala-AMP and then transferred to the acceptor end of tRNA(Ala). Also edits incorrectly charged Ser-tRNA(Ala) and Gly-tRNA(Ala) via its editing domain. The chain is Alanine--tRNA ligase from Thermoanaerobacter pseudethanolicus (strain ATCC 33223 / 39E) (Clostridium thermohydrosulfuricum).